A 1220-amino-acid chain; its full sequence is DNA-directed RNA polymerase subunit beta' (1220 aa).

Zn(2+) is bound by residues Cys-60, Cys-62, Cys-75, and Cys-78. Residues Asp-449, Asp-451, and Asp-453 each contribute to the Mg(2+) site. Zn(2+) contacts are provided by Cys-818, Cys-892, Cys-899, and Cys-902.

This sequence belongs to the RNA polymerase beta' chain family. The RNAP catalytic core consists of 2 alpha, 1 beta, 1 beta' and 1 omega subunit. When a sigma factor is associated with the core the holoenzyme is formed, which can initiate transcription. Requires Mg(2+) as cofactor. Zn(2+) serves as cofactor.

The catalysed reaction is RNA(n) + a ribonucleoside 5'-triphosphate = RNA(n+1) + diphosphate. Functionally, DNA-dependent RNA polymerase catalyzes the transcription of DNA into RNA using the four ribonucleoside triphosphates as substrates. This chain is DNA-directed RNA polymerase subunit beta', found in Lacticaseibacillus casei (strain BL23) (Lactobacillus casei).